The primary structure comprises 550 residues: Probable acyl-activating enzyme 9 (550 aa).

Belongs to the ATP-dependent AMP-binding enzyme family. In terms of tissue distribution, expressed in leaves, flowers and developing seeds.

Functionally, may act as an acid--thiol ligase that activates carboxylic acids by forming acyl-CoAs. The chain is Probable acyl-activating enzyme 9 (AEE9) from Arabidopsis thaliana (Mouse-ear cress).